An 861-amino-acid polypeptide reads, in one-letter code: Xylan 1,4-beta-xylosidase (861 aa).

The first 19 residues, 1-19 (MKYQLFLSLALCVGLGASA), serve as a signal peptide directing secretion. The active-site Nucleophile is the Asp-269. In terms of domain architecture, PA14 spans 458–600 (DGKKGLKGTF…DYQETIAQLK (143 aa)). Residue Glu-616 is the Proton donor/acceptor of the active site.

It belongs to the glycosyl hydrolase 3 family. As to quaternary structure, exists as a large polymeric species, presumably as a homononamer.

It carries out the reaction Hydrolysis of (1-&gt;4)-beta-D-xylans, to remove successive D-xylose residues from the non-reducing termini.. The catalysed reaction is Hydrolysis of terminal non-reducing alpha-L-arabinofuranoside residues in alpha-L-arabinosides.. Its pathway is glycan degradation; xylan degradation. In terms of biological role, involved in degradation of plant cell wall polysaccharides. Has beta-xylosidase activity via its capacity to hydrolyze glycosidic linkages of beta-1,4-xylo-oligosaccharides of various lengths (X2 to X6), releasing xylose monomers. To a much lesser extent, also has alpha-L-arabinofuranosidase activity. Does not possess beta-D-glucosidase activity. Acts synergistically with Xyn10D-Fae1A to increase the release of xylose from xylan. In Xylanibacter ruminicola (strain ATCC 19189 / DSM 19721 / CIP 105475 / JCM 8958 / 23) (Prevotella ruminicola), this protein is Xylan 1,4-beta-xylosidase.